A 223-amino-acid polypeptide reads, in one-letter code: MAGTFSLEPCSTSSSCNHQGKRSESSLLEKRLSEDSSRHWRLQKWASMSSADASRTLLERREEKAAAAENPLVFLCTRCRRPLGDSLTWVASQEDTNCILLRSVSSNVSVDKEQKLSKCRDEDGCILETLYCSGCSLSLGYVYRCTPKNLDYKRNLFCLSVEAVESYTLGSSEQQIVSEEEFFNLESRVEIEKSIKQMEDVLTVMQAKLWEVESKLSKAGRYS.

The interval 1–30 (MAGTFSLEPCSTSSSCNHQGKRSESSLLEK) is disordered. Residues 9–18 (PCSTSSSCNH) are compositionally biased toward polar residues. Residues 21–30 (KRSESSLLEK) are compositionally biased toward basic and acidic residues. Phosphoserine occurs at positions 33, 36, and 37. The Mis18 domain maps to 71–169 (PLVFLCTRCR…SVEAVESYTL (99 aa)). Zn(2+) contacts are provided by Cys76, Cys79, Cys132, and Cys135. Lys153 participates in a covalent cross-link: Glycyl lysine isopeptide (Lys-Gly) (interchain with G-Cter in SUMO2). Ser223 is modified (phosphoserine).

It belongs to the mis18 family. As to quaternary structure, homodimer, and heterodimer with OIP5/MIS18B. Identified in a complex containing MIS18A, OIP5/MIS18B, MIS18BP1, RBBP7 and RBBP4.

It localises to the nucleus. The protein localises to the chromosome. The protein resides in the centromere. Functionally, required for recruitment of CENPA to centromeres and normal chromosome segregation during mitosis. The polypeptide is Protein Mis18-alpha (Mis18a) (Rattus norvegicus (Rat)).